The following is a 430-amino-acid chain: Putative cytochrome P450 139 (430 aa).

Cys372 contacts heme.

This sequence belongs to the cytochrome P450 family. Requires heme as cofactor.

This chain is Putative cytochrome P450 139 (cyp139), found in Mycobacterium bovis (strain ATCC BAA-935 / AF2122/97).